Consider the following 492-residue polypeptide: Protein nucleotidyltransferase YdiU (492 aa).

Residues glycine 91, glycine 93, arginine 94, lysine 114, aspartate 126, glycine 127, arginine 180, and arginine 187 each coordinate ATP. Aspartate 256 functions as the Proton acceptor in the catalytic mechanism. 2 residues coordinate Mg(2+): asparagine 257 and aspartate 266. Position 266 (aspartate 266) interacts with ATP.

Belongs to the SELO family. Mg(2+) serves as cofactor. Mn(2+) is required as a cofactor.

The enzyme catalyses L-seryl-[protein] + ATP = 3-O-(5'-adenylyl)-L-seryl-[protein] + diphosphate. It carries out the reaction L-threonyl-[protein] + ATP = 3-O-(5'-adenylyl)-L-threonyl-[protein] + diphosphate. The catalysed reaction is L-tyrosyl-[protein] + ATP = O-(5'-adenylyl)-L-tyrosyl-[protein] + diphosphate. It catalyses the reaction L-histidyl-[protein] + UTP = N(tele)-(5'-uridylyl)-L-histidyl-[protein] + diphosphate. The enzyme catalyses L-seryl-[protein] + UTP = O-(5'-uridylyl)-L-seryl-[protein] + diphosphate. It carries out the reaction L-tyrosyl-[protein] + UTP = O-(5'-uridylyl)-L-tyrosyl-[protein] + diphosphate. Its function is as follows. Nucleotidyltransferase involved in the post-translational modification of proteins. It can catalyze the addition of adenosine monophosphate (AMP) or uridine monophosphate (UMP) to a protein, resulting in modifications known as AMPylation and UMPylation. In Synechococcus sp. (strain ATCC 27144 / PCC 6301 / SAUG 1402/1) (Anacystis nidulans), this protein is Protein nucleotidyltransferase YdiU.